Reading from the N-terminus, the 224-residue chain is Retinoschisin (224 aa).

The signal sequence occupies residues 1–23; it reads MPHKIEGFFLLLLFGYEATLGLS. The 157-residue stretch at 63 to 219 folds into the F5/8 type C domain; sequence CPYHKPLGFE…IAIRMELLEC (157 aa). 2 disulfides stabilise this stretch: Cys63-Cys219 and Cys110-Cys142.

In terms of assembly, homooctamer of 4 homodimers; disulfide-linked. The homooctamer has a flat, cogwheel structure with a diameter of about 14 nm. Two stacked octamers can assemble to form a hexadecamer. Detected in the eye cup. Detected in retina, in the inner segment of the photoreceptors, the inner nuclear layer, the inner plexiform layer and the ganglion cell layer (at protein level). Restricted to the retina. At the mRNA level, detected only within the photoreceptor cell layer, most prominently within the inner segments of the photoreceptors. Undetectable in the inner plexiform layers and the inner nuclear layer.

Its subcellular location is the secreted. It is found in the cell membrane. Functionally, binds negatively charged membrane lipids, such as phosphatidylserine and phosphoinositides. May play a role in cell-cell adhesion processes in the retina, via homomeric interaction between octamers present on the surface of two neighboring cells. Required for normal structure and function of the retina. This is Retinoschisin (Rs1) from Mus musculus (Mouse).